The primary structure comprises 184 residues: Ribosome-recycling factor (184 aa).

Belongs to the RRF family.

The protein localises to the cytoplasm. Functionally, responsible for the release of ribosomes from messenger RNA at the termination of protein biosynthesis. May increase the efficiency of translation by recycling ribosomes from one round of translation to another. The sequence is that of Ribosome-recycling factor from Stenotrophomonas maltophilia (strain K279a).